The chain runs to 52 residues: uncharacterized protein (52 aa).

This is an uncharacterized protein from Caenorhabditis elegans.